A 215-amino-acid polypeptide reads, in one-letter code: Large ribosomal subunit protein uL3 (215 aa).

Gln-156 is subject to N5-methylglutamine.

Belongs to the universal ribosomal protein uL3 family. Part of the 50S ribosomal subunit. Forms a cluster with proteins L14 and L19. In terms of processing, methylated by PrmB.

Functionally, one of the primary rRNA binding proteins, it binds directly near the 3'-end of the 23S rRNA, where it nucleates assembly of the 50S subunit. This Xylella fastidiosa (strain M23) protein is Large ribosomal subunit protein uL3.